The following is a 399-amino-acid chain: Exodeoxyribonuclease 7 large subunit (399 aa).

Belongs to the XseA family. As to quaternary structure, heterooligomer composed of large and small subunits.

It is found in the cytoplasm. The catalysed reaction is Exonucleolytic cleavage in either 5'- to 3'- or 3'- to 5'-direction to yield nucleoside 5'-phosphates.. Its function is as follows. Bidirectionally degrades single-stranded DNA into large acid-insoluble oligonucleotides, which are then degraded further into small acid-soluble oligonucleotides. This chain is Exodeoxyribonuclease 7 large subunit, found in Clostridium beijerinckii (strain ATCC 51743 / NCIMB 8052) (Clostridium acetobutylicum).